A 199-amino-acid polypeptide reads, in one-letter code: Holliday junction branch migration complex subunit RuvA (199 aa).

The tract at residues 1-64 (MIGRISGLLL…EDGHFLYGFA (64 aa)) is domain I. Residues 65-143 (TDEERTAFRQ…KALPQVAGAR (79 aa)) are domain II. The flexible linker stretch occupies residues 144–154 (LAAVAGGAPDA). The interval 154-199 (AKSDILNALLALGYNEKEALGAMKGLAEDTGVSDGIRQALKLLSKA) is domain III.

The protein belongs to the RuvA family. Homotetramer. Forms an RuvA(8)-RuvB(12)-Holliday junction (HJ) complex. HJ DNA is sandwiched between 2 RuvA tetramers; dsDNA enters through RuvA and exits via RuvB. An RuvB hexamer assembles on each DNA strand where it exits the tetramer. Each RuvB hexamer is contacted by two RuvA subunits (via domain III) on 2 adjacent RuvB subunits; this complex drives branch migration. In the full resolvosome a probable DNA-RuvA(4)-RuvB(12)-RuvC(2) complex forms which resolves the HJ.

The protein resides in the cytoplasm. Its function is as follows. The RuvA-RuvB-RuvC complex processes Holliday junction (HJ) DNA during genetic recombination and DNA repair, while the RuvA-RuvB complex plays an important role in the rescue of blocked DNA replication forks via replication fork reversal (RFR). RuvA specifically binds to HJ cruciform DNA, conferring on it an open structure. The RuvB hexamer acts as an ATP-dependent pump, pulling dsDNA into and through the RuvAB complex. HJ branch migration allows RuvC to scan DNA until it finds its consensus sequence, where it cleaves and resolves the cruciform DNA. This Azoarcus sp. (strain BH72) protein is Holliday junction branch migration complex subunit RuvA.